Here is a 440-residue protein sequence, read N- to C-terminus: WAS/WASL-interacting protein family member 2 (440 aa).

Residues 1-18 show a composition bias toward pro residues; that stretch reads MPIPPPPPPPPGPPPPPT. The segment at 1-36 is disordered; that stretch reads MPIPPPPPPPPGPPPPPTFHQANTEQPKLSRDEQRG. The WH2 domain maps to 36-53; it reads GRGALLQDICKGTKLKKV. Arg-37 is modified (asymmetric dimethylarginine). Positions 49-52 are binds actin; sequence KLKK. Disordered regions lie at residues 56–387 and 419–440; these read INDR…DSIT and RIYPSKTNRAARGAPPLPPILR. The segment covering 116–133 has biased composition (low complexity); it reads PSSRAAAPRPPVSAASGR. Residues 161 to 172 are compositionally biased toward polar residues; that stretch reads RPNTTSSTGMKH. Pro residues-rich tracts occupy residues 176 to 193, 222 to 236, 249 to 262, and 356 to 378; these read APPPPPPGRRANAPPTPL, EGPPAPPPVKPPPSP, APPPPPYRQPPGVP, and RGKPPPPPSRTPAGPPPPPPPPL.

The protein belongs to the verprolin family. In terms of assembly, interacts with WASL and WASP, and this interaction results in cytoplasmic relocation of these two proteins along actin filaments. Interacts with NCK2 resulting in the localization to sites of focal adhesions. No interaction was seen with WASF2 and WASF3. Expressed mainly in brain, colon, lung and stomach (at protein level). Ubiquitously expressed, with high expression in brain, kidney, lung, and placenta.

Its subcellular location is the cytoplasm. It localises to the cytoskeleton. Its function is as follows. Plays an active role in the formation of cell surface protrusions downstream of activated PDGFB receptors. Plays an important role in actin-microspike formation through cooperation with WASL. May cooperate with WASP and WASL to induce mobilization and reorganization of the actin filament system. The protein is WAS/WASL-interacting protein family member 2 (WIPF2) of Homo sapiens (Human).